The chain runs to 88 residues: MADSTAGAKKRKKRSTSATSTRKEPPTVIPEDECTTCSICQSKLVMFSGVSKYKLSDYLNTGKVFTNSNIRCKACGSSLCHLRDLSKS.

The disordered stretch occupies residues 1 to 28 (MADSTAGAKKRKKRSTSATSTRKEPPTV).

Belongs to the chordopoxvirinae A19 family.

The sequence is that of Protein A19 homolog from Fowlpox virus (strain NVSL) (FPV).